Consider the following 101-residue polypeptide: Ascorbate-specific PTS system EIIB component (101 aa).

In terms of domain architecture, PTS EIIB type-2 spans 3–96 (VRILAVCGNG…KLLEVIKAHF (94 aa)). The Phosphocysteine intermediate role is filled by cysteine 9. At cysteine 9 the chain carries Phosphocysteine.

It is found in the cytoplasm. The catalysed reaction is N(pros)-phospho-L-histidyl-[protein] + L-ascorbate(out) = L-ascorbate 6-phosphate(in) + L-histidyl-[protein]. The phosphoenolpyruvate-dependent sugar phosphotransferase system (sugar PTS), a major carbohydrate active transport system, catalyzes the phosphorylation of incoming sugar substrates concomitantly with their translocation across the cell membrane. The enzyme II UlaABC PTS system is involved in ascorbate transport. The protein is Ascorbate-specific PTS system EIIB component (ulaB) of Escherichia coli O6:H1 (strain CFT073 / ATCC 700928 / UPEC).